A 116-amino-acid polypeptide reads, in one-letter code: Large ribosomal subunit protein bL19 (116 aa).

It belongs to the bacterial ribosomal protein bL19 family.

Functionally, this protein is located at the 30S-50S ribosomal subunit interface and may play a role in the structure and function of the aminoacyl-tRNA binding site. The polypeptide is Large ribosomal subunit protein bL19 (Staphylococcus aureus (strain USA300)).